The following is a 475-amino-acid chain: tRNA-2-methylthio-N(6)-dimethylallyladenosine synthase (475 aa).

Residues 1–21 form a disordered region; the sequence is MTTAPTSPALPASSDTAPTGP. In terms of domain architecture, MTTase N-terminal spans 24–145; that stretch reads RGLHVITWGC…LPEMVARAAR (122 aa). Positions 33, 69, 108, 186, 190, and 193 each coordinate [4Fe-4S] cluster. Positions 172-404 constitute a Radical SAM core domain; it reads TQGNLTAFLT…QALLREQQDA (233 aa). The TRAM domain occupies 407–469; the sequence is ADMVGTVQEI…TNSLGGTLIR (63 aa).

This sequence belongs to the methylthiotransferase family. MiaB subfamily. In terms of assembly, monomer. It depends on [4Fe-4S] cluster as a cofactor.

Its subcellular location is the cytoplasm. It catalyses the reaction N(6)-dimethylallyladenosine(37) in tRNA + (sulfur carrier)-SH + AH2 + 2 S-adenosyl-L-methionine = 2-methylsulfanyl-N(6)-dimethylallyladenosine(37) in tRNA + (sulfur carrier)-H + 5'-deoxyadenosine + L-methionine + A + S-adenosyl-L-homocysteine + 2 H(+). Functionally, catalyzes the methylthiolation of N6-(dimethylallyl)adenosine (i(6)A), leading to the formation of 2-methylthio-N6-(dimethylallyl)adenosine (ms(2)i(6)A) at position 37 in tRNAs that read codons beginning with uridine. This chain is tRNA-2-methylthio-N(6)-dimethylallyladenosine synthase, found in Gluconobacter oxydans (strain 621H) (Gluconobacter suboxydans).